Reading from the N-terminus, the 271-residue chain is 4-hydroxy-tetrahydrodipicolinate reductase (271 aa).

NAD(+) contacts are provided by residues G11–M16 and E37. NADP(+) is bound at residue R38. NAD(+)-binding positions include G101 to T103 and A125 to M128. The active-site Proton donor/acceptor is H158. (S)-2,3,4,5-tetrahydrodipicolinate is bound at residue H159. K162 serves as the catalytic Proton donor. G168 to T169 contacts (S)-2,3,4,5-tetrahydrodipicolinate.

The protein belongs to the DapB family.

It is found in the cytoplasm. The catalysed reaction is (S)-2,3,4,5-tetrahydrodipicolinate + NAD(+) + H2O = (2S,4S)-4-hydroxy-2,3,4,5-tetrahydrodipicolinate + NADH + H(+). It catalyses the reaction (S)-2,3,4,5-tetrahydrodipicolinate + NADP(+) + H2O = (2S,4S)-4-hydroxy-2,3,4,5-tetrahydrodipicolinate + NADPH + H(+). Its pathway is amino-acid biosynthesis; L-lysine biosynthesis via DAP pathway; (S)-tetrahydrodipicolinate from L-aspartate: step 4/4. In terms of biological role, catalyzes the conversion of 4-hydroxy-tetrahydrodipicolinate (HTPA) to tetrahydrodipicolinate. The chain is 4-hydroxy-tetrahydrodipicolinate reductase from Shewanella loihica (strain ATCC BAA-1088 / PV-4).